A 141-amino-acid chain; its full sequence is Pancreatic progenitor cell differentiation and proliferation factor-like protein (141 aa).

The tract at residues 72–141 (DQSACGGNGP…GAPKDTNSPQ (70 aa)) is disordered. The span at 95 to 105 (SLLQQEESQLL) shows a compositional bias: low complexity. Over residues 112 to 122 (GTVNRFRNSQT) the composition is skewed to polar residues.

It belongs to the PPDPF family.

The chain is Pancreatic progenitor cell differentiation and proliferation factor-like protein from Bos taurus (Bovine).